The following is a 575-amino-acid chain: Hemagglutinin-neuraminidase (575 aa).

Positions 1–10 are enriched in basic and acidic residues; the sequence is MDGDRGKRDS. The tract at residues 1–27 is disordered; it reads MDGDRGKRDSYWSTSPSGSTTKPASGW. The Intravirion portion of the chain corresponds to 1 to 37; it reads MDGDRGKRDSYWSTSPSGSTTKPASGWERSSKADTWL. Positions 10 to 14 are incorporation in virion; that stretch reads SYWST. Over residues 11 to 23 the composition is skewed to polar residues; the sequence is YWSTSPSGSTTKP. A helical; Signal-anchor for type II membrane protein membrane pass occupies residues 38–58; sequence LILSFTQWALSIATVIICIII. The segment at 59–140 is interaction with F protein; the sequence is SARQGYSMKE…RQELTQHCES (82 aa). The Virion surface segment spans residues 59–575; sequence SARQGYSMKE…SIPKLCKAES (517 aa). Asn-77 carries an N-linked (GlcNAc...) asparagine; by host glycan. Disulfide bonds link Cys-192–Cys-216, Cys-258–Cys-271, Cys-357–Cys-469, and Cys-463–Cys-473. The involved in neuraminidase activity stretch occupies residues 254–259; sequence NRKSCS. 2 N-linked (GlcNAc...) asparagine; by host glycosylation sites follow: Asn-499 and Asn-511. A disulfide bridge links Cys-535 with Cys-544.

The protein belongs to the paramyxoviruses hemagglutinin-neuraminidase family. As to quaternary structure, homotetramer; composed of disulfide-linked homodimers. Interacts with F protein trimer. N-glycosylated; glycans consist of a mixture of high mannose-type oligosaccharides and of complex-type oligosaccharides.

The protein localises to the virion membrane. Its subcellular location is the host cell membrane. The enzyme catalyses Hydrolysis of alpha-(2-&gt;3)-, alpha-(2-&gt;6)-, alpha-(2-&gt;8)- glycosidic linkages of terminal sialic acid residues in oligosaccharides, glycoproteins, glycolipids, colominic acid and synthetic substrates.. In terms of biological role, attaches the virus to sialic acid-containing cell receptors and thereby initiating infection. Binding of HN protein to the receptor induces a conformational change that allows the F protein to trigger virion/cell membranes fusion. Neuraminidase activity ensures the efficient spread of the virus by dissociating the mature virions from the neuraminic acid containing glycoproteins. The polypeptide is Hemagglutinin-neuraminidase (HN) (Sendai virus (strain Z) (SeV)).